A 104-amino-acid polypeptide reads, in one-letter code: L-rhamnose mutarotase (104 aa).

Residue tyrosine 18 coordinates substrate. Histidine 22 (proton donor) is an active-site residue. Substrate contacts are provided by residues tyrosine 41 and 76 to 77 (WW).

This sequence belongs to the rhamnose mutarotase family. In terms of assembly, homodimer.

The protein resides in the cytoplasm. It catalyses the reaction alpha-L-rhamnose = beta-L-rhamnose. Its pathway is carbohydrate metabolism; L-rhamnose metabolism. In terms of biological role, involved in the anomeric conversion of L-rhamnose. This Escherichia coli O7:K1 (strain IAI39 / ExPEC) protein is L-rhamnose mutarotase.